The following is a 382-amino-acid chain: MKKIILAAGGTGGHFFPAVALGEELVKRGYEVHFITDLRCQKYINQNLGLIFHILDLKRSSNIFLFLPNLSIAILKAIKLLYNIRSSAIIGFGSYPVISSMFAAVFLRVPIIIHEQNSYLGKVNKFFASFAKRIAISYEEVKNLPEFAKSKIVVTGGIVRENIRELDSIVYSASHRGLITGSKKIKKRLDSVVTPQNDKLFTIFIFGGSQGATLFSELIPASIQILMQKQPNLKLNIIQQAALDDQVKIKDIYSKLNINYECAEFFDNMALQYKEADVVISRAGASTIEELTYIGLPAIFIPLPSAADNHQYYNAKLLEDKKAGWCLEQSDISAGKLADKILDLISNPKILEEASKNLLKRRKEGHVLLSDLIEGVIYHPVA.

UDP-N-acetyl-alpha-D-glucosamine is bound by residues 11-13 (TGG), Asn117, Arg160, Ser209, and Gln311.

This sequence belongs to the glycosyltransferase 28 family. MurG subfamily.

It is found in the cell inner membrane. The catalysed reaction is di-trans,octa-cis-undecaprenyl diphospho-N-acetyl-alpha-D-muramoyl-L-alanyl-D-glutamyl-meso-2,6-diaminopimeloyl-D-alanyl-D-alanine + UDP-N-acetyl-alpha-D-glucosamine = di-trans,octa-cis-undecaprenyl diphospho-[N-acetyl-alpha-D-glucosaminyl-(1-&gt;4)]-N-acetyl-alpha-D-muramoyl-L-alanyl-D-glutamyl-meso-2,6-diaminopimeloyl-D-alanyl-D-alanine + UDP + H(+). It functions in the pathway cell wall biogenesis; peptidoglycan biosynthesis. In terms of biological role, cell wall formation. Catalyzes the transfer of a GlcNAc subunit on undecaprenyl-pyrophosphoryl-MurNAc-pentapeptide (lipid intermediate I) to form undecaprenyl-pyrophosphoryl-MurNAc-(pentapeptide)GlcNAc (lipid intermediate II). The polypeptide is UDP-N-acetylglucosamine--N-acetylmuramyl-(pentapeptide) pyrophosphoryl-undecaprenol N-acetylglucosamine transferase (Rickettsia akari (strain Hartford)).